The chain runs to 238 residues: Lactate utilization protein A (238 aa).

This sequence belongs to the LutA/YkgE family.

In terms of biological role, is involved in L-lactate degradation and allows cells to grow with lactate as the sole carbon source. The polypeptide is Lactate utilization protein A (Bacillus pumilus (strain SAFR-032)).